Consider the following 211-residue polypeptide: FMN-dependent NADH:quinone oxidoreductase 2 (211 aa).

102 to 105 (MWNF) provides a ligand contact to FMN.

It belongs to the azoreductase type 1 family. Homodimer. It depends on FMN as a cofactor.

The catalysed reaction is 2 a quinone + NADH + H(+) = 2 a 1,4-benzosemiquinone + NAD(+). It catalyses the reaction N,N-dimethyl-1,4-phenylenediamine + anthranilate + 2 NAD(+) = 2-(4-dimethylaminophenyl)diazenylbenzoate + 2 NADH + 2 H(+). Quinone reductase that provides resistance to thiol-specific stress caused by electrophilic quinones. Its function is as follows. Also exhibits azoreductase activity. Catalyzes the reductive cleavage of the azo bond in aromatic azo compounds to the corresponding amines. The chain is FMN-dependent NADH:quinone oxidoreductase 2 from Bacillus cereus (strain ATCC 14579 / DSM 31 / CCUG 7414 / JCM 2152 / NBRC 15305 / NCIMB 9373 / NCTC 2599 / NRRL B-3711).